Consider the following 203-residue polypeptide: Ribonuclease T (203 aa).

The region spanning 11–185 is the Exonuclease domain; the sequence is VVVDVETGGF…YDTEKTAELF (175 aa). Residues Asp-14, Glu-16, His-172, and Asp-177 each coordinate Mg(2+). His-172 serves as the catalytic Proton donor/acceptor.

It belongs to the RNase T family. As to quaternary structure, homodimer. Mg(2+) is required as a cofactor.

Functionally, trims short 3' overhangs of a variety of RNA species, leaving a one or two nucleotide 3' overhang. Responsible for the end-turnover of tRNA: specifically removes the terminal AMP residue from uncharged tRNA (tRNA-C-C-A). Also appears to be involved in tRNA biosynthesis. In Pseudomonas putida (strain ATCC 47054 / DSM 6125 / CFBP 8728 / NCIMB 11950 / KT2440), this protein is Ribonuclease T.